Here is a 252-residue protein sequence, read N- to C-terminus: Ubiquinone/menaquinone biosynthesis C-methyltransferase UbiE (252 aa).

S-adenosyl-L-methionine-binding positions include threonine 71, aspartate 100, 124–125 (DA), and serine 141.

Belongs to the class I-like SAM-binding methyltransferase superfamily. MenG/UbiE family.

The catalysed reaction is a 2-demethylmenaquinol + S-adenosyl-L-methionine = a menaquinol + S-adenosyl-L-homocysteine + H(+). The enzyme catalyses a 2-methoxy-6-(all-trans-polyprenyl)benzene-1,4-diol + S-adenosyl-L-methionine = a 5-methoxy-2-methyl-3-(all-trans-polyprenyl)benzene-1,4-diol + S-adenosyl-L-homocysteine + H(+). The protein operates within quinol/quinone metabolism; menaquinone biosynthesis; menaquinol from 1,4-dihydroxy-2-naphthoate: step 2/2. Its pathway is cofactor biosynthesis; ubiquinone biosynthesis. Functionally, methyltransferase required for the conversion of demethylmenaquinol (DMKH2) to menaquinol (MKH2) and the conversion of 2-polyprenyl-6-methoxy-1,4-benzoquinol (DDMQH2) to 2-polyprenyl-3-methyl-6-methoxy-1,4-benzoquinol (DMQH2). This chain is Ubiquinone/menaquinone biosynthesis C-methyltransferase UbiE, found in Caulobacter sp. (strain K31).